The sequence spans 414 residues: Serine/threonine transporter SstT (414 aa).

8 consecutive transmembrane segments (helical) span residues 16–36, 46–66, 84–104, 143–163, 180–200, 219–239, 300–320, and 332–352; these read GSLV…AWIS, LGTL…LMLV, ILFL…VFSF, ALLN…GFAL, AVTF…FGLV, LVVL…LLVF, MAGA…TLGV, and VVAS…LLLI.

This sequence belongs to the dicarboxylate/amino acid:cation symporter (DAACS) (TC 2.A.23) family.

The protein resides in the cell inner membrane. It catalyses the reaction L-serine(in) + Na(+)(in) = L-serine(out) + Na(+)(out). The enzyme catalyses L-threonine(in) + Na(+)(in) = L-threonine(out) + Na(+)(out). In terms of biological role, involved in the import of serine and threonine into the cell, with the concomitant import of sodium (symport system). This chain is Serine/threonine transporter SstT, found in Salmonella dublin (strain CT_02021853).